A 146-amino-acid chain; its full sequence is 3-hydroxyacyl-[acyl-carrier-protein] dehydratase FabZ (146 aa).

H47 is an active-site residue.

The protein belongs to the thioester dehydratase family. FabZ subfamily.

It is found in the cytoplasm. The catalysed reaction is a (3R)-hydroxyacyl-[ACP] = a (2E)-enoyl-[ACP] + H2O. Involved in unsaturated fatty acids biosynthesis. Catalyzes the dehydration of short chain beta-hydroxyacyl-ACPs and long chain saturated and unsaturated beta-hydroxyacyl-ACPs. The polypeptide is 3-hydroxyacyl-[acyl-carrier-protein] dehydratase FabZ (Nitrosospira multiformis (strain ATCC 25196 / NCIMB 11849 / C 71)).